Here is a 286-residue protein sequence, read N- to C-terminus: Beta-lactamase SHV-29 (286 aa).

Residues 1–21 (MRYIRLCIISLLATLPLAVHA) form the signal peptide. Ser66 (acyl-ester intermediate) is an active-site residue. A disulfide bond links Cys73 and Cys119. Catalysis depends on Glu164, which acts as the Proton acceptor. 230–232 (KTG) provides a ligand contact to substrate.

The protein belongs to the class-A beta-lactamase family.

It catalyses the reaction a beta-lactam + H2O = a substituted beta-amino acid. The chain is Beta-lactamase SHV-29 (bla) from Klebsiella pneumoniae.